We begin with the raw amino-acid sequence, 225 residues long: Imidazole glycerol phosphate synthase subunit HisH (225 aa).

The Glutamine amidotransferase type-1 domain maps to 3–225 (TIAIVDYGMG…LYRNFVDWQP (223 aa)). The active-site Nucleophile is the cysteine 82. Residues histidine 205 and glutamate 207 contribute to the active site.

In terms of assembly, heterodimer of HisH and HisF.

The protein localises to the cytoplasm. It carries out the reaction 5-[(5-phospho-1-deoxy-D-ribulos-1-ylimino)methylamino]-1-(5-phospho-beta-D-ribosyl)imidazole-4-carboxamide + L-glutamine = D-erythro-1-(imidazol-4-yl)glycerol 3-phosphate + 5-amino-1-(5-phospho-beta-D-ribosyl)imidazole-4-carboxamide + L-glutamate + H(+). The enzyme catalyses L-glutamine + H2O = L-glutamate + NH4(+). Its pathway is amino-acid biosynthesis; L-histidine biosynthesis; L-histidine from 5-phospho-alpha-D-ribose 1-diphosphate: step 5/9. IGPS catalyzes the conversion of PRFAR and glutamine to IGP, AICAR and glutamate. The HisH subunit catalyzes the hydrolysis of glutamine to glutamate and ammonia as part of the synthesis of IGP and AICAR. The resulting ammonia molecule is channeled to the active site of HisF. The sequence is that of Imidazole glycerol phosphate synthase subunit HisH from Bordetella pertussis (strain Tohama I / ATCC BAA-589 / NCTC 13251).